Here is a 151-residue protein sequence, read N- to C-terminus: Zinc finger HIT domain-containing protein 3 (151 aa).

The Zn(2+) site is built by C11, C14, C22, C25, C30, C34, H38, and C42. The segment at 11–42 (CVVCLEKPKYRCPTCRVPYCSVPCFQKHKEQC) adopts an HIT-type zinc-finger fold. The segment covering 43–53 (SSEARPVEKRR) has biased composition (basic and acidic residues). Residues 43 to 81 (SSEARPVEKRRAGPPVRSEESKDDDSSVADFLNSDEEED) form a disordered region. Acidic residues predominate over residues 63-81 (SKDDDSSVADFLNSDEEED). Residue S76 is modified to Phosphoserine.

In terms of assembly, thyroid receptor interacting proteins (TRIPs) specifically interact with the ligand binding domain of the thyroid receptor (TR). Requires the presence of thyroid hormone for its interaction. Interacts with NUFIP1. Interacts (via HIT-type zinc finger) with the RUVBL1/RUVBL2 complex in the presence of ADP. Expressed in the cerebellum.

It localises to the cytoplasm. It is found in the nucleus. The polypeptide is Zinc finger HIT domain-containing protein 3 (Znhit3) (Mus musculus (Mouse)).